Consider the following 142-residue polypeptide: ATP synthase epsilon chain (142 aa).

This sequence belongs to the ATPase epsilon chain family. In terms of assembly, F-type ATPases have 2 components, CF(1) - the catalytic core - and CF(0) - the membrane proton channel. CF(1) has five subunits: alpha(3), beta(3), gamma(1), delta(1), epsilon(1). CF(0) has three main subunits: a, b and c.

The protein resides in the cell membrane. Produces ATP from ADP in the presence of a proton gradient across the membrane. The chain is ATP synthase epsilon chain from Lactiplantibacillus plantarum (strain ATCC BAA-793 / NCIMB 8826 / WCFS1) (Lactobacillus plantarum).